The following is a 426-amino-acid chain: Glutamate-1-semialdehyde 2,1-aminomutase (426 aa).

K265 is modified (N6-(pyridoxal phosphate)lysine).

It belongs to the class-III pyridoxal-phosphate-dependent aminotransferase family. HemL subfamily. Homodimer. Requires pyridoxal 5'-phosphate as cofactor.

The protein resides in the cytoplasm. The catalysed reaction is (S)-4-amino-5-oxopentanoate = 5-aminolevulinate. It participates in porphyrin-containing compound metabolism; protoporphyrin-IX biosynthesis; 5-aminolevulinate from L-glutamyl-tRNA(Glu): step 2/2. The protein is Glutamate-1-semialdehyde 2,1-aminomutase of Cellvibrio japonicus (strain Ueda107) (Pseudomonas fluorescens subsp. cellulosa).